A 54-amino-acid polypeptide reads, in one-letter code: UPF0181 protein APJL_0874 (54 aa).

It belongs to the UPF0181 family.

This chain is UPF0181 protein APJL_0874, found in Actinobacillus pleuropneumoniae serotype 3 (strain JL03).